We begin with the raw amino-acid sequence, 428 residues long: Probable methanogen homoaconitase large subunit (428 aa).

[4Fe-4S] cluster-binding residues include Cys304, Cys364, and Cys367.

This sequence belongs to the aconitase/IPM isomerase family. LeuC type 2 subfamily. In terms of assembly, heterotetramer of 2 HacA and 2 HacB proteins.

It carries out the reaction (2R)-homocitrate = (2R,3S)-homoisocitrate. It catalyses the reaction (2R)-homocitrate = cis-homoaconitate + H2O. The catalysed reaction is (2R,3S)-homoisocitrate = cis-homoaconitate + H2O. The enzyme catalyses cis-(homo)2aconitate + H2O = (2R,3S)-iso(homo)2citrate. It carries out the reaction cis-(homo)3aconitate + H2O = (2R,3S)-iso(homo)3citrate. It functions in the pathway organic acid metabolism; 2-oxosuberate biosynthesis. Its function is as follows. Component of a hydro-lyase with broad substrate specificity for cis-unsaturated tricarboxylic acids. Catalyzes both the reversible dehydration of (R)-homocitrate ((R)-2-hydroxybutane-1,2,4-tricarboxylate) to produce cis-homoaconitate ((Z)-but-1-ene-1,2,4-tricarboxylate), and its hydration to homoisocitrate ((1R,2S)-1-hydroxybutane-1,2,4-tricarboxylate). Is also able to hydrate the analogous longer chain substrates cis-homo(2)-aconitate, cis-homo(3)-aconitate. These reactions are part of the biosynthesis pathway of coenzyme B. The protein is Probable methanogen homoaconitase large subunit (hacA) of Methanothermobacter thermautotrophicus (strain ATCC 29096 / DSM 1053 / JCM 10044 / NBRC 100330 / Delta H) (Methanobacterium thermoautotrophicum).